The primary structure comprises 1604 residues: Metabotropic glutamate receptor-like protein R (1604 aa).

The N-terminal stretch at 1–27 is a signal peptide; it reads MVIKKPFIFIFICFLICLLICIDLTNC. Over 28 to 1149 the chain is Extracellular; sequence NTINNNNNNN…TDVSKTKIAK (1122 aa). Positions 38–69 are enriched in low complexity; sequence NNNNNNNNNNNNNNNNNNNNNNNNNNNNNNDN. Residues 38-72 form a disordered region; the sequence is NNNNNNNNNNNNNNNNNNNNNNNNNNNNNNDNNEN. Residues 98-133 adopt a coiled-coil conformation; the sequence is DFYINKIKKEIKDREKYKNNIENEILKINSQKKRKK. The segment at 213 to 263 is disordered; that stretch reads NNNNNNNNNNNNNNNNNNKNNNNNNNNKNNNNNNNNKNNNNNNNNKNNNKN. N-linked (GlcNAc...) asparagine glycosylation is found at Asn285, Asn327, Asn359, Asn375, Asn489, Asn498, Asn525, Asn577, Asn593, Asn624, Asn768, Asn837, Asn841, Asn851, Asn864, Asn876, Asn885, Asn888, Asn913, Asn967, Asn991, Asn1097, and Asn1109. Residues 1150–1170 form a helical membrane-spanning segment; it reads IIIGISAIIVSIGVLITAILT. Residues 1171–1184 are Cytoplasmic-facing; the sequence is FIYRKRKIMRYSNP. Residues 1185 to 1205 traverse the membrane as a helical segment; the sequence is VFLLIILVGCVCGLVSTFVSF. Residues 1206–1211 lie on the Extracellular side of the membrane; it reads STTSAT. A helical transmembrane segment spans residues 1212–1232; sequence CSIRMVLIPLFFFIITSAIFI. Residues 1233-1256 lie on the Cytoplasmic side of the membrane; the sequence is KQYRVYCLIRGVEELHDMSIENSY. A helical membrane pass occupies residues 1257–1277; it reads LLKLQSFILIIPAILIAVSVI. The Extracellular segment spans residues 1278–1304; sequence ATRMHRKYNFDLQKETIQAYCYSKNFY. Residues 1305–1325 form a helical membrane-spanning segment; the sequence is IIFICLALYEFSILLYGCWIV. At 1326–1340 the chain is on the cytoplasmic side; that stretch reads IKCRQYRSFPGSFNE. A helical transmembrane segment spans residues 1341–1361; it reads FFYIGVLIYVLTVILVVSIPI. Residues 1362–1372 are Extracellular-facing; that stretch reads GFALLNSALTD. Residues 1373–1393 form a helical membrane-spanning segment; sequence FLLYSIPILVLIVAIIGLLFA. The Cytoplasmic portion of the chain corresponds to 1394 to 1604; the sequence is PKFYFLFRTD…KSSQNSPLLD (211 aa). The segment at 1457–1604 is disordered; it reads TGSNTSDDVS…KSSQNSPLLD (148 aa). 2 stretches are compositionally biased toward low complexity: residues 1471 to 1527 and 1534 to 1556; these read FDSP…NKNN and SSSNSSSTADFEISSSGESGRSS. Residues 1563–1572 show a composition bias toward basic residues; sequence NNKKNRRKNS. Over residues 1573 to 1584 the composition is skewed to polar residues; the sequence is LRTPILNSLLSP.

It belongs to the G-protein coupled receptor 3 family. GABA-B receptor subfamily.

The protein localises to the membrane. The protein is Metabotropic glutamate receptor-like protein R (grlR) of Dictyostelium discoideum (Social amoeba).